The primary structure comprises 212 residues: Glycerol-3-phosphate acyltransferase (212 aa).

The next 5 membrane-spanning stretches (helical) occupy residues 10–30, 90–110, 124–144, 150–170, and 171–191; these read FAAL…AVVV, GYGL…SLGF, FAVS…VAVV, LAAL…GGTI, and WPLN…LFYR.

It belongs to the PlsY family. As to quaternary structure, probably interacts with PlsX.

The protein localises to the cell inner membrane. The catalysed reaction is an acyl phosphate + sn-glycerol 3-phosphate = a 1-acyl-sn-glycero-3-phosphate + phosphate. It participates in lipid metabolism; phospholipid metabolism. Catalyzes the transfer of an acyl group from acyl-phosphate (acyl-PO(4)) to glycerol-3-phosphate (G3P) to form lysophosphatidic acid (LPA). This enzyme utilizes acyl-phosphate as fatty acyl donor, but not acyl-CoA or acyl-ACP. The polypeptide is Glycerol-3-phosphate acyltransferase (Bordetella avium (strain 197N)).